The chain runs to 122 residues: uncharacterized protein (122 aa).

This is an uncharacterized protein from Aquifex aeolicus (strain VF5).